The primary structure comprises 346 residues: D-alanine--D-alanine ligase (346 aa).

Positions 133–327 constitute an ATP-grasp domain; that stretch reads KLYAKSVGVK…TLADQIPLEK (195 aa). Residue 159-211 participates in ATP binding; it reads LRFPCIIKPARLGSSIGISIVKDEKDLEYAKDVGFEFDNDLVVEEFKNNIKEY. The Mg(2+) site is built by Asp-284, Glu-296, and Asn-298.

It belongs to the D-alanine--D-alanine ligase family. Requires Mg(2+) as cofactor. It depends on Mn(2+) as a cofactor.

It localises to the cytoplasm. It carries out the reaction 2 D-alanine + ATP = D-alanyl-D-alanine + ADP + phosphate + H(+). It participates in cell wall biogenesis; peptidoglycan biosynthesis. Cell wall formation. This chain is D-alanine--D-alanine ligase, found in Campylobacter jejuni subsp. doylei (strain ATCC BAA-1458 / RM4099 / 269.97).